We begin with the raw amino-acid sequence, 320 residues long: MAAHYLEFERPIADLEAKIEELSRLSETASPGAFDGEIESLRARAQDMRREAYANLDAWQKTQVARHPDRPHFVDYVAALIEDFQELRGDRKFADDQAIMGGLGRFRGMPVVVMGHEKGRDTVTRVKHNFGYARPEGYRKAIRLMELAERFNLPVVSFVDTAGAYPGVASEERGVAEAIARSTEKCLMLETPNVAVITGEGGSGGAIAIAATSRVLILEHAIYSVIAPEGANSILWRGARTAGEAAKAMKITAQDLERMKIVDRIIREPAGGAHSDPEAAMQAVGDAVEEELKALLALDAATLKAQRAERFYAIGRSGLQ.

One can recognise a CoA carboxyltransferase C-terminal domain in the interval 33–294; it reads AFDGEIESLR…GDAVEEELKA (262 aa).

This sequence belongs to the AccA family. Acetyl-CoA carboxylase is a heterohexamer composed of biotin carboxyl carrier protein (AccB), biotin carboxylase (AccC) and two subunits each of ACCase subunit alpha (AccA) and ACCase subunit beta (AccD).

The protein localises to the cytoplasm. It carries out the reaction N(6)-carboxybiotinyl-L-lysyl-[protein] + acetyl-CoA = N(6)-biotinyl-L-lysyl-[protein] + malonyl-CoA. Its pathway is lipid metabolism; malonyl-CoA biosynthesis; malonyl-CoA from acetyl-CoA: step 1/1. Functionally, component of the acetyl coenzyme A carboxylase (ACC) complex. First, biotin carboxylase catalyzes the carboxylation of biotin on its carrier protein (BCCP) and then the CO(2) group is transferred by the carboxyltransferase to acetyl-CoA to form malonyl-CoA. The protein is Acetyl-coenzyme A carboxylase carboxyl transferase subunit alpha of Phenylobacterium zucineum (strain HLK1).